Reading from the N-terminus, the 389-residue chain is Succinate--CoA ligase [ADP-forming] subunit beta (389 aa).

In terms of domain architecture, ATP-grasp spans 9–244 (KEILRKYNVP…LDEEDANEIE (236 aa)). ATP-binding positions include K46, 53–55 (GRG), E99, A102, and E107. Mg(2+) contacts are provided by N199 and D213. Substrate is bound by residues N264 and 321–323 (GIM).

This sequence belongs to the succinate/malate CoA ligase beta subunit family. Heterotetramer of two alpha and two beta subunits. It depends on Mg(2+) as a cofactor.

The catalysed reaction is succinate + ATP + CoA = succinyl-CoA + ADP + phosphate. It carries out the reaction GTP + succinate + CoA = succinyl-CoA + GDP + phosphate. Its pathway is carbohydrate metabolism; tricarboxylic acid cycle; succinate from succinyl-CoA (ligase route): step 1/1. In terms of biological role, succinyl-CoA synthetase functions in the citric acid cycle (TCA), coupling the hydrolysis of succinyl-CoA to the synthesis of either ATP or GTP and thus represents the only step of substrate-level phosphorylation in the TCA. The beta subunit provides nucleotide specificity of the enzyme and binds the substrate succinate, while the binding sites for coenzyme A and phosphate are found in the alpha subunit. The chain is Succinate--CoA ligase [ADP-forming] subunit beta from Cupriavidus pinatubonensis (strain JMP 134 / LMG 1197) (Cupriavidus necator (strain JMP 134)).